Here is a 150-residue protein sequence, read N- to C-terminus: Linear element protein rec25 (150 aa).

The residue at position 11 (Ser11) is a Phosphoserine.

Component of linear elements (LinEs), which are similar to synaptonemal complexes, at least composed of rec27, rec25, rec10 and mug20. Interacts with rec10; the interaction is direct.

It is found in the cytoplasm. It localises to the nucleus. The protein resides in the chromosome. Functionally, during meiotic DNA recombination, binds to and may help activate DNA double-strand break (DSB) hotspot sites. This is Linear element protein rec25 from Schizosaccharomyces pombe (strain 972 / ATCC 24843) (Fission yeast).